The chain runs to 76 residues: Conotoxin Bu28 (76 aa).

Positions 1–24 (MTSVQSATCCCLLWLVLCVQLVTP) are cleaved as a signal peptide. Residues 25-39 (DSPATAQLSRHLTAR) constitute a propeptide that is removed on maturation. Cystine bridges form between C50–C63 and C54–C65. At R69 the chain carries Arginine amide. The propeptide occupies 71–76 (VVSSSI).

Belongs to the conotoxin J superfamily. In terms of tissue distribution, expressed by the venom duct.

It localises to the secreted. Functionally, highly inhibits both nicotinic acetylcholine receptors (neuronal (alpha-3/beta-4) and muscular (alpha-1/beta-1/epsilon/delta) subtypes) and the voltage-gated potassium channel Kv1.6/KCNA6 subtype. The chain is Conotoxin Bu28 from Conus bullatus (Bubble cone).